The primary structure comprises 300 residues: U1 small nuclear ribonucleoprotein 70 kDa homolog (300 aa).

The RRM domain maps to 107-198 (RTIFIGRLPY…RTVKYFKPRR (92 aa)). Disordered stretches follow at residues 204–248 (GGRG…AYSA) and 263–300 (NRPLLSAATPTAAVTSVYKSRNSRTRESQPAPKEAPDY). Residues 265 to 279 (PLLSAATPTAAVTSV) show a composition bias toward low complexity.

In terms of assembly, component of the spliceosome, where it is associated with snRNP U1. Binds stem loop I of U1 snRNA. Interacts with mRNA.

The protein localises to the nucleus. Functionally, involved in nuclear mRNA splicing. In Saccharomyces cerevisiae (strain ATCC 204508 / S288c) (Baker's yeast), this protein is U1 small nuclear ribonucleoprotein 70 kDa homolog (SNP1).